The chain runs to 819 residues: Protein O-mannosyl-transferase tmem260 (819 aa).

Over residues 1–10 (MNNSPTLSNT) the composition is skewed to polar residues. The tract at residues 1–68 (MNNSPTLSNT…NNNNNIINVN (68 aa)) is disordered. Over residues 15 to 68 (NNNNNSNSNSNSNNNNNNNNNNNNNSNNNNNNNNNVNRNVNNRNNNNNNIINVN) the composition is skewed to low complexity. N-linked (GlcNAc...) asparagine glycosylation is found at asparagine 18, asparagine 38, and asparagine 70. A run of 7 helical transmembrane segments spans residues 113–133 (IACI…TQYP), 152–172 (VAHP…SHII), 185–205 (FMSS…VYLW), 210–230 (WCGL…MYQI), 232–252 (GEVF…GVWY), 285–305 (LTNQ…LMFI), and 316–336 (ILSN…LLFI). Residue asparagine 349 is glycosylated (N-linked (GlcNAc...) asparagine). 4 helical membrane-spanning segments follow: residues 391–411 (LIIQ…LNLL), 427–447 (MIIF…NLPI), 459–479 (FFMQ…KSIF), and 505–525 (YLLP…NYNL). 4 N-linked (GlcNAc...) asparagine glycosylation sites follow: asparagine 531, asparagine 686, asparagine 693, and asparagine 783.

Belongs to the glycosyltransferase 117 (GT117) family.

The protein resides in the endoplasmic reticulum membrane. The enzyme catalyses a di-trans,poly-cis-dolichyl beta-D-mannosyl phosphate + L-seryl-[protein] = 3-O-(alpha-D-mannosyl)-L-seryl-[protein] + a di-trans,poly-cis-dolichyl phosphate + H(+). It carries out the reaction a di-trans,poly-cis-dolichyl beta-D-mannosyl phosphate + L-threonyl-[protein] = 3-O-(alpha-D-mannosyl)-L-threonyl-[protein] + a di-trans,poly-cis-dolichyl phosphate + H(+). O-mannosyl-transferase that transfers mannosyl residues to the hydroxyl group of serine or threonine residues of proteins. In Dictyostelium discoideum (Social amoeba), this protein is Protein O-mannosyl-transferase tmem260.